The sequence spans 191 residues: dTTP/UTP pyrophosphatase (191 aa).

Catalysis depends on D71, which acts as the Proton acceptor.

It belongs to the Maf family. YhdE subfamily. Requires a divalent metal cation as cofactor.

The protein localises to the cytoplasm. It carries out the reaction dTTP + H2O = dTMP + diphosphate + H(+). The enzyme catalyses UTP + H2O = UMP + diphosphate + H(+). In terms of biological role, nucleoside triphosphate pyrophosphatase that hydrolyzes dTTP and UTP. May have a dual role in cell division arrest and in preventing the incorporation of modified nucleotides into cellular nucleic acids. The chain is dTTP/UTP pyrophosphatase from Geobacter sulfurreducens (strain ATCC 51573 / DSM 12127 / PCA).